A 218-amino-acid polypeptide reads, in one-letter code: Pyridoxine/pyridoxamine 5'-phosphate oxidase (218 aa).

Residues 12–15 and Arg70 each bind substrate; that span reads RLSY. Residues 65–70, 80–81, Lys87, and Gln109 each bind FMN; these read RTVLLR and YT. Substrate is bound by residues Tyr127, Arg131, and Ser135. FMN contacts are provided by residues 145–146 and Trp191; that span reads QS. 197 to 199 contacts substrate; it reads RLH. Arg201 lines the FMN pocket.

This sequence belongs to the pyridoxamine 5'-phosphate oxidase family. As to quaternary structure, homodimer. Requires FMN as cofactor.

It catalyses the reaction pyridoxamine 5'-phosphate + O2 + H2O = pyridoxal 5'-phosphate + H2O2 + NH4(+). The enzyme catalyses pyridoxine 5'-phosphate + O2 = pyridoxal 5'-phosphate + H2O2. The protein operates within cofactor metabolism; pyridoxal 5'-phosphate salvage; pyridoxal 5'-phosphate from pyridoxamine 5'-phosphate: step 1/1. It participates in cofactor metabolism; pyridoxal 5'-phosphate salvage; pyridoxal 5'-phosphate from pyridoxine 5'-phosphate: step 1/1. Catalyzes the oxidation of either pyridoxine 5'-phosphate (PNP) or pyridoxamine 5'-phosphate (PMP) into pyridoxal 5'-phosphate (PLP). In Acinetobacter baumannii (strain AB0057), this protein is Pyridoxine/pyridoxamine 5'-phosphate oxidase.